A 146-amino-acid polypeptide reads, in one-letter code: Large-conductance mechanosensitive channel (146 aa).

Helical transmembrane passes span 12 to 32 (AFAMRGNVIDMAVGVIIGGAF) and 83 to 103 (GNFLQATFDFIIIAFSIFLFI).

It belongs to the MscL family. In terms of assembly, homopentamer.

The protein localises to the cell inner membrane. In terms of biological role, channel that opens in response to stretch forces in the membrane lipid bilayer. May participate in the regulation of osmotic pressure changes within the cell. This is Large-conductance mechanosensitive channel from Phocaeicola vulgatus (strain ATCC 8482 / DSM 1447 / JCM 5826 / CCUG 4940 / NBRC 14291 / NCTC 11154) (Bacteroides vulgatus).